Reading from the N-terminus, the 311-residue chain is MEDKNGAPHGAPHSDSPLGFSHAAPEEDTPAPELAPEAPEPPEEPRLGVLTVTDTTPDSMRLSWSVAQGPFDSFVVQYEDTNGQPQALLVDGDQSKILISGLEPSTPYRFLLYGLHEGKRLGPLSAEGTTGLAPAGQTSEESRPRLSQLSVTDVTTSSLRLNWEAPPGAFDSFLLRFGVPSPSTLEPHPRPLLQRELMVPGTRHSAVLRDLRSGTLYSLTLYGLRGPHKADSIQGTARTLSPVLESPRDLQFSEIRETSAKVNWMPPPSRADSFKVSYQLADGGEPQSVQVDGRARTQKLQFLTVPHSCVH.

Disordered stretches follow at residues 1–47 (MEDK…EPRL) and 124–150 (LSAEGTTGLAPAGQTSEESRPRLSQLS). Fibronectin type-III domains are found at residues 41–135 (PPEE…LAPA), 145–249 (RLSQ…SPRD), and 250–311 (LQFS…SCVH).

Expressed in the adrenal gland.

The protein is Putative tenascin-XA (TNXA) of Homo sapiens (Human).